Reading from the N-terminus, the 1058-residue chain is Carbamoyl phosphate synthase large chain (1058 aa).

The interval 1–401 (MPKRKDIQKI…SLLKACRSLE (401 aa)) is carboxyphosphate synthetic domain. Residues R129, R169, G175, G176, R208, I210, E215, G241, I242, H243, Q284, and E298 each contribute to the ATP site. Residues 133–327 (KQLMQELDQP…IAKLAAKIAV (195 aa)) form the ATP-grasp 1 domain. 3 residues coordinate Mg(2+): Q284, E298, and N300. 3 residues coordinate Mn(2+): Q284, E298, and N300. The interval 402–546 (IGVCHNEMTS…YSTYELENES (145 aa)) is oligomerization domain. Positions 547–929 (VQSNKESILV…ALYKAFEANN (383 aa)) are carbamoyl phosphate synthetic domain. Residues 671 to 861 (EKALKELGIP…MAQIATKLIL (191 aa)) enclose the ATP-grasp 2 domain. Positions 707, 746, 748, 752, 777, 778, 779, 780, 820, and 832 each coordinate ATP. Mg(2+) is bound by residues Q820, E832, and N834. The Mn(2+) site is built by Q820, E832, and N834. The MGS-like domain occupies 930-1058 (SHLSEFGQIV…ESRCFNIEAI (129 aa)). The segment at 930–1058 (SHLSEFGQIV…ESRCFNIEAI (129 aa)) is allosteric domain.

It belongs to the CarB family. Composed of two chains; the small (or glutamine) chain promotes the hydrolysis of glutamine to ammonia, which is used by the large (or ammonia) chain to synthesize carbamoyl phosphate. Tetramer of heterodimers (alpha,beta)4. Mg(2+) is required as a cofactor. Mn(2+) serves as cofactor.

It catalyses the reaction hydrogencarbonate + L-glutamine + 2 ATP + H2O = carbamoyl phosphate + L-glutamate + 2 ADP + phosphate + 2 H(+). The catalysed reaction is hydrogencarbonate + NH4(+) + 2 ATP = carbamoyl phosphate + 2 ADP + phosphate + 2 H(+). It functions in the pathway amino-acid biosynthesis; L-arginine biosynthesis; carbamoyl phosphate from bicarbonate: step 1/1. Its pathway is pyrimidine metabolism; UMP biosynthesis via de novo pathway; (S)-dihydroorotate from bicarbonate: step 1/3. Its function is as follows. Large subunit of the glutamine-dependent carbamoyl phosphate synthetase (CPSase). CPSase catalyzes the formation of carbamoyl phosphate from the ammonia moiety of glutamine, carbonate, and phosphate donated by ATP, constituting the first step of 2 biosynthetic pathways, one leading to arginine and/or urea and the other to pyrimidine nucleotides. The large subunit (synthetase) binds the substrates ammonia (free or transferred from glutamine from the small subunit), hydrogencarbonate and ATP and carries out an ATP-coupled ligase reaction, activating hydrogencarbonate by forming carboxy phosphate which reacts with ammonia to form carbamoyl phosphate. In Streptococcus pyogenes serotype M49 (strain NZ131), this protein is Carbamoyl phosphate synthase large chain.